The chain runs to 431 residues: Ubiquitin-like modifier-activating enzyme 5 (431 aa).

Gly-92, Asp-113, Lys-136, Asn-159, and Asn-197 together coordinate ATP. Residues Cys-239 and Cys-242 each contribute to the Zn(2+) site. Cys-263 (glycyl thioester intermediate) is an active-site residue. Zn(2+)-binding residues include Cys-316 and Cys-321. The interval Ala-339–Ala-396 is disordered.

It belongs to the ubiquitin-activating E1 family. UBA5 subfamily.

Its function is as follows. E1-like enzyme which activates UFM1. In Arabidopsis thaliana (Mouse-ear cress), this protein is Ubiquitin-like modifier-activating enzyme 5.